The primary structure comprises 309 residues: 2-dehydro-3-deoxygluconokinase (309 aa).

Substrate is bound by residues 28–32 (GDTLN), Y88, 102–104 (YWR), and R170. ATP contacts are provided by residues 168–170 (NYR), 228–233 (KRGADS), and 261–264 (AAGD). Substrate is bound at residue D264. The active-site Proton acceptor is the D264.

It belongs to the carbohydrate kinase pfkB family.

The enzyme catalyses 2-dehydro-3-deoxy-D-gluconate + ATP = 2-dehydro-3-deoxy-6-phospho-D-gluconate + ADP + H(+). Its pathway is carbohydrate acid metabolism; 2-dehydro-3-deoxy-D-gluconate degradation; D-glyceraldehyde 3-phosphate and pyruvate from 2-dehydro-3-deoxy-D-gluconate: step 1/2. Functionally, catalyzes the phosphorylation of 2-keto-3-deoxygluconate (KDG) to produce 2-keto-3-deoxy-6-phosphogluconate (KDPG). The protein is 2-dehydro-3-deoxygluconokinase (kdgK) of Escherichia coli (strain ATCC 9637 / CCM 2024 / DSM 1116 / LMG 11080 / NBRC 13500 / NCIMB 8666 / NRRL B-766 / W).